Here is a 271-residue protein sequence, read N- to C-terminus: Aquaporin-11 (271 aa).

Topologically, residues 1 to 14 are cytoplasmic; the sequence is MSPLLGLRSELQDT. Residues 15-35 form a helical membrane-spanning segment; the sequence is CTSLGLMLSVVLLMGLARVVA. At 36–41 the chain is on the lumenal side; the sequence is RQQLHR. A helical transmembrane segment spans residues 42–62; it reads PVAHAFVLEFLATFQLCCCTH. Residues 63 to 74 are Cytoplasmic-facing; the sequence is ELQLLSEQHPAH. Residues 75-95 traverse the membrane as a helical segment; it reads PTWTLTLVYFFSLVHGLTLVG. Over 96-163 the chain is Lumenal; sequence TSSNPCGVMM…ACKNPIRVDL (68 aa). An NPC motif is present at residues 99–101; sequence NPC. The chain crosses the membrane as a helical span at residues 164 to 184; the sequence is LKAVITEAVCSFLFHSALLHF. Topologically, residues 185–194 are cytoplasmic; the sequence is QEVRTKLRIH. A helical membrane pass occupies residues 195–215; sequence LLAALITFLVYAGGSLTGAVF. The NPA motif lies at 216 to 218; it reads NPA. Over 216 to 234 the chain is Lumenal; that stretch reads NPALALSLHFMCFDEAFPQ. The chain crosses the membrane as a helical span at residues 235 to 255; sequence FFIVYWLAPSLGILLMILMFS. Residues 256–271 are Cytoplasmic-facing; sequence FFLPWLHNNHTINKKE.

The protein belongs to the MIP/aquaporin (TC 1.A.8) family. AQP11/AQP12 subfamily. Homodimer; disulfide-linked. Homotetramer. Can also form homomultimer. Post-translationally, not glycosylated. As to expression, detected in the sperm head and tail (at protein level). Expressed in subcutaneous adipocytes. Expressed in testis, kidney and ejaculated spermatozoa.

Its subcellular location is the endoplasmic reticulum membrane. It is found in the cytoplasmic vesicle membrane. It localises to the cell membrane. The catalysed reaction is H2O(in) = H2O(out). It catalyses the reaction glycerol(in) = glycerol(out). The enzyme catalyses H2O2(out) = H2O2(in). Its function is as follows. Channel protein that facilitates the transport of water, glycerol and hydrogen peroxide across membrane of cell or organelles guaranteeing intracellular homeostasis in several organes like liver, kidney and brain. In situation of stress, participates in endoplasmic reticulum (ER) homeostasis by regulating redox homeostasis through the transport of hydrogen peroxide across the endoplasmic reticulum membrane thereby regulating the oxidative stress through the NADPH oxidase 2 pathway. Plays a role by maintaining an environment suitable for translation or protein foldings in the ER lumen namely by participating in the PKD1 glycosylation processing resulting in regulation of PKD1 membrane trafficking thereby preventing the accumulation of unfolding protein in ER. Plays a role in the proximal tubule function by regulating its endosomal acidification. May play a role in postnatal kidney development. The sequence is that of Aquaporin-11 from Homo sapiens (Human).